The following is a 471-amino-acid chain: Probable multidrug-efflux transporter MT1670 (471 aa).

14 helical membrane passes run 23-43 (IVLA…ISLL), 55-75 (LYAW…TTVN), 91-111 (LAVF…QILV), 116-136 (LQGI…NSTL), 146-166 (ALVS…GGLF), 174-194 (WAFG…PVAL), 213-233 (VPVW…VAAL), 237-257 (LVQT…FVVV), 279-299 (IYLT…VPLF), 308-328 (PVAA…GEVA), 337-357 (VIGH…ALGA), 366-386 (VGII…IGIA), 410-430 (AINV…GVVV), and 438-458 (VAAA…GVIA).

Belongs to the major facilitator superfamily.

Its subcellular location is the cell membrane. Could be involved in fluoroquinolones efflux. This chain is Probable multidrug-efflux transporter MT1670, found in Mycobacterium tuberculosis (strain CDC 1551 / Oshkosh).